Reading from the N-terminus, the 178-residue chain is Ribosome maturation factor RimM (178 aa).

Residues 101 to 178 (ADEYYWYQLV…VMRVEWDADF (78 aa)) enclose the PRC barrel domain.

The protein belongs to the RimM family. Binds ribosomal protein uS19.

Its subcellular location is the cytoplasm. Its function is as follows. An accessory protein needed during the final step in the assembly of 30S ribosomal subunit, possibly for assembly of the head region. Essential for efficient processing of 16S rRNA. May be needed both before and after RbfA during the maturation of 16S rRNA. It has affinity for free ribosomal 30S subunits but not for 70S ribosomes. The polypeptide is Ribosome maturation factor RimM (Pseudomonas putida (strain GB-1)).